The following is a 456-amino-acid chain: Putative gluconeogenesis factor (456 aa).

The protein belongs to the gluconeogenesis factor family.

Its subcellular location is the cytoplasm. Required for morphogenesis under gluconeogenic growth conditions. The polypeptide is Putative gluconeogenesis factor (Nostoc sp. (strain PCC 7120 / SAG 25.82 / UTEX 2576)).